Reading from the N-terminus, the 239-residue chain is Lactate utilization protein A (239 aa).

It belongs to the LutA/YkgE family.

Its function is as follows. Is involved in L-lactate degradation and allows cells to grow with lactate as the sole carbon source. The polypeptide is Lactate utilization protein A (Bacillus cereus (strain G9842)).